A 153-amino-acid polypeptide reads, in one-letter code: Endoribonuclease YbeY (153 aa).

Positions 118, 122, and 128 each coordinate Zn(2+).

This sequence belongs to the endoribonuclease YbeY family. Requires Zn(2+) as cofactor.

It localises to the cytoplasm. Its function is as follows. Single strand-specific metallo-endoribonuclease involved in late-stage 70S ribosome quality control and in maturation of the 3' terminus of the 16S rRNA. The chain is Endoribonuclease YbeY from Pelagibacter ubique (strain HTCC1062).